The primary structure comprises 218 residues: uncharacterized protein (218 aa).

This is an uncharacterized protein from Mycoplasma genitalium (strain ATCC 33530 / DSM 19775 / NCTC 10195 / G37) (Mycoplasmoides genitalium).